Reading from the N-terminus, the 78-residue chain is DNA import protein CedA1 (78 aa).

A run of 2 helical transmembrane segments spans residues Ser12 to Leu32 and Ala53 to Ile73.

As to quaternary structure, forms a complex composed of CedA, CedA1 and CedA2.

Its subcellular location is the cell membrane. Its function is as follows. Part of the Ced system, which is involved in DNA import. This chain is DNA import protein CedA1, found in Sulfolobus acidocaldarius (strain ATCC 33909 / DSM 639 / JCM 8929 / NBRC 15157 / NCIMB 11770).